The chain runs to 212 residues: Uridine kinase (212 aa).

ATP is bound at residue 13 to 20 (GASASGKS).

Belongs to the uridine kinase family.

The protein resides in the cytoplasm. It catalyses the reaction uridine + ATP = UMP + ADP + H(+). The catalysed reaction is cytidine + ATP = CMP + ADP + H(+). Its pathway is pyrimidine metabolism; CTP biosynthesis via salvage pathway; CTP from cytidine: step 1/3. The protein operates within pyrimidine metabolism; UMP biosynthesis via salvage pathway; UMP from uridine: step 1/1. The polypeptide is Uridine kinase (Shewanella putrefaciens (strain CN-32 / ATCC BAA-453)).